A 154-amino-acid polypeptide reads, in one-letter code: Ribonuclease H (154 aa).

Positions 1–142 constitute an RNase H type-1 domain; the sequence is MRKQVEIFTD…CDELARAAAS (142 aa). Residues aspartate 10, glutamate 48, aspartate 70, and aspartate 134 each contribute to the Mg(2+) site.

The protein belongs to the RNase H family. As to quaternary structure, monomer. The cofactor is Mg(2+).

The protein localises to the cytoplasm. It carries out the reaction Endonucleolytic cleavage to 5'-phosphomonoester.. Its function is as follows. Endonuclease that specifically degrades the RNA of RNA-DNA hybrids. This chain is Ribonuclease H, found in Pectobacterium atrosepticum (strain SCRI 1043 / ATCC BAA-672) (Erwinia carotovora subsp. atroseptica).